Reading from the N-terminus, the 420-residue chain is Zinc finger protein 362 (420 aa).

Disordered stretches follow at residues 1 to 28, 54 to 80, and 115 to 155; these read MSRSSPSGKGHSRMAEPRFNNPYFWPPP, RPPHLPPTSASSQQPLLVPPAPAESSQ, and VTGL…SQSR. Residues 121–154 show a composition bias toward low complexity; that stretch reads STRTPSVSTSESSAGAGTGTGTSTPSTPTTTSQS. A Phosphothreonine modification is found at Thr162. The disordered stretch occupies residues 178-202; it reads TIQGHGLLGPPKSERGRKKIKAENP. Lys198 is covalently cross-linked (Glycyl lysine isopeptide (Lys-Gly) (interchain with G-Cter in SUMO2)). C2H2-type zinc fingers lie at residues 227–249, 255–277, 283–305, 311–335, 341–363, and 371–393; these read YRCKVCPLTFFTKSEMQIHSKSH, HKCPHCSKSFANASYLAQHLRIH, YHCSYCDKSFRQLSHLQQHTRIH, YKCPHPGCEKAFTQLSNLQSHQRQH, YKCPNCYRAYSDSASLQIHLSAH, and YCCSMCGRAYTSETYLMKHMSKH. A Phosphoserine modification is found at Ser404.

It belongs to the krueppel C2H2-type zinc-finger protein family.

It is found in the nucleus. Functionally, may be involved in transcriptional regulation. This Homo sapiens (Human) protein is Zinc finger protein 362 (ZNF362).